Reading from the N-terminus, the 469-residue chain is Neuraminidase (469 aa).

Over 1-9 (MNPNQKIIT) the chain is Intravirion. The helical transmembrane segment at 10-30 (IGSVSLTIATVCFLMQIAILV) threads the bilayer. Residues 11 to 33 (GSVSLTIATVCFLMQIAILVTTV) form an involved in apical transport and lipid raft association region. At 31 to 469 (TTVTLHFKQY…DGADINLMPI (439 aa)) the chain is on the virion surface side. The segment at 36–88 (HFKQYECDSPANNQVMPCEPIIIERNITEIVYLTNTTIEKEICPKLVEYRNWS) is hypervariable stalk region. N-linked (GlcNAc...) asparagine; by host glycosylation is found at Asn-61, Asn-70, and Asn-86. A head of neuraminidase region spans residues 91–469 (QCKITGFAPF…DGADINLMPI (379 aa)). 8 disulfides stabilise this stretch: Cys-92/Cys-417, Cys-124/Cys-129, Cys-183/Cys-230, Cys-232/Cys-237, Cys-278/Cys-291, Cys-280/Cys-289, Cys-318/Cys-337, and Cys-421/Cys-447. Residue Arg-118 participates in substrate binding. N-linked (GlcNAc...) asparagine; by host glycosylation occurs at Asn-146. Asp-151 serves as the catalytic Proton donor/acceptor. A substrate-binding site is contributed by Arg-152. Asn-200 and Asn-234 each carry an N-linked (GlcNAc...) asparagine; by host glycan. 276-277 (EE) lines the substrate pocket. Arg-292 is a binding site for substrate. The Ca(2+) site is built by Asp-293, Gly-297, and Asp-324. A disordered region spans residues 326–350 (PRNNDRSSNSNCRNPNNDKGNHGVK). The span at 331-343 (RSSNSNCRNPNND) shows a compositional bias: low complexity. Position 371 (Arg-371) interacts with substrate. N-linked (GlcNAc...) asparagine; by host glycosylation is present at Asn-402. Tyr-406 (nucleophile) is an active-site residue.

Belongs to the glycosyl hydrolase 34 family. In terms of assembly, homotetramer. Ca(2+) serves as cofactor. N-glycosylated.

Its subcellular location is the virion membrane. It localises to the host apical cell membrane. The enzyme catalyses Hydrolysis of alpha-(2-&gt;3)-, alpha-(2-&gt;6)-, alpha-(2-&gt;8)- glycosidic linkages of terminal sialic acid residues in oligosaccharides, glycoproteins, glycolipids, colominic acid and synthetic substrates.. Its activity is regulated as follows. Inhibited by the neuraminidase inhibitors zanamivir (Relenza) and oseltamivir (Tamiflu). These drugs interfere with the release of progeny virus from infected cells and are effective against all influenza strains. Resistance to neuraminidase inhibitors is quite rare. Functionally, catalyzes the removal of terminal sialic acid residues from viral and cellular glycoconjugates. Cleaves off the terminal sialic acids on the glycosylated HA during virus budding to facilitate virus release. Additionally helps virus spread through the circulation by further removing sialic acids from the cell surface. These cleavages prevent self-aggregation and ensure the efficient spread of the progeny virus from cell to cell. Otherwise, infection would be limited to one round of replication. Described as a receptor-destroying enzyme because it cleaves a terminal sialic acid from the cellular receptors. May facilitate viral invasion of the upper airways by cleaving the sialic acid moieties on the mucin of the airway epithelial cells. Likely to plays a role in the budding process through its association with lipid rafts during intracellular transport. May additionally display a raft-association independent effect on budding. Plays a role in the determination of host range restriction on replication and virulence. Sialidase activity in late endosome/lysosome traffic seems to enhance virus replication. The sequence is that of Neuraminidase from Aves (whales).